The sequence spans 463 residues: tRNA modification GTPase MnmE (463 aa).

The (6S)-5-formyl-5,6,7,8-tetrahydrofolate site is built by arginine 27, glutamate 92, and lysine 131. The 153-residue stretch at glycine 234–serine 386 folds into the TrmE-type G domain. Asparagine 244 contacts K(+). Residues asparagine 244 to serine 249, threonine 263 to threonine 269, and aspartate 288 to glycine 291 contribute to the GTP site. Residue serine 248 participates in Mg(2+) binding. Threonine 263, valine 265, and threonine 268 together coordinate K(+). A Mg(2+)-binding site is contributed by threonine 269. Lysine 463 contacts (6S)-5-formyl-5,6,7,8-tetrahydrofolate.

This sequence belongs to the TRAFAC class TrmE-Era-EngA-EngB-Septin-like GTPase superfamily. TrmE GTPase family. In terms of assembly, homodimer. Heterotetramer of two MnmE and two MnmG subunits. K(+) serves as cofactor.

It is found in the cytoplasm. Its function is as follows. Exhibits a very high intrinsic GTPase hydrolysis rate. Involved in the addition of a carboxymethylaminomethyl (cmnm) group at the wobble position (U34) of certain tRNAs, forming tRNA-cmnm(5)s(2)U34. In Mycoplasmopsis synoviae (strain 53) (Mycoplasma synoviae), this protein is tRNA modification GTPase MnmE.